The sequence spans 383 residues: MNHSKTLLLTAAAGLMLTCGAVSSQAKHKLSDPYHFTVNAAAETEPVDTAGDAADDPAIWLDPKNPQNSKLITTNKKSGLAVYSLEGKMLHSYHTGKLNNVDIRYDFPLNGKKVDIAAASNRSEGKNTIEIYAIDGKNGTLQSITDPNRPIASAIDEVYGFSLYHSQKTGKYYAMVTGKEGEFEQYELNADKNGYISGKKVRAFKMNSQTEGMAADDEYGSLYIAEEDEAIWKFSAEPDGGSNGTVIDRADGRHLTPDIEGLTIYYAADGKGYLLASSQGNSSYAIYERQGQNKYVADFQITDGPETDGTSDTDGIDVLGFGLGPEYPFGLFVAQDGENIDHGQKANQNFKMVPWERIADKIGFHPQVNKQVDPRKMTDRSGK.

The signal sequence occupies residues 1-26 (MNHSKTLLLTAAAGLMLTCGAVSSQA). A propeptide spanning residues 27–30 (KHKL) is cleaved from the precursor. A BPP domain is found at 31–362 (SDPYHFTVNA…VPWERIADKI (332 aa)). The segment at 364 to 383 (FHPQVNKQVDPRKMTDRSGK) is disordered. Positions 372–383 (VDPRKMTDRSGK) are enriched in basic and acidic residues.

It is found in the secreted. The catalysed reaction is 1D-myo-inositol hexakisphosphate + H2O = 1D-myo-inositol 1,2,4,5,6-pentakisphosphate + phosphate. This Bacillus sp. (strain DS11) protein is 3-phytase (phy).